A 665-amino-acid polypeptide reads, in one-letter code: DNA ligase (665 aa).

NAD(+)-binding positions include 32 to 36 (DSEYD), 81 to 82 (SL), and Glu110. Lys112 (N6-AMP-lysine intermediate) is an active-site residue. Residues Arg133, Glu167, Lys283, and Lys307 each contribute to the NAD(+) site. Zn(2+) is bound by residues Cys401, Cys404, Cys419, and Cys424. The BRCT domain occupies 586 to 665 (EGHPDFSGKT…AAFIEKQNGI (80 aa)).

It belongs to the NAD-dependent DNA ligase family. LigA subfamily. Requires Mg(2+) as cofactor. The cofactor is Mn(2+).

The catalysed reaction is NAD(+) + (deoxyribonucleotide)n-3'-hydroxyl + 5'-phospho-(deoxyribonucleotide)m = (deoxyribonucleotide)n+m + AMP + beta-nicotinamide D-nucleotide.. In terms of biological role, DNA ligase that catalyzes the formation of phosphodiester linkages between 5'-phosphoryl and 3'-hydroxyl groups in double-stranded DNA using NAD as a coenzyme and as the energy source for the reaction. It is essential for DNA replication and repair of damaged DNA. The sequence is that of DNA ligase from Staphylococcus epidermidis (strain ATCC 35984 / DSM 28319 / BCRC 17069 / CCUG 31568 / BM 3577 / RP62A).